Here is a 501-residue protein sequence, read N- to C-terminus: Spore development regulator VOSA (501 aa).

Disordered regions lie at residues 26–55 (GQFGDPNLTPPQAETQMSAQASAQAVGQEP), 67–88 (PQRARVAQGKEKGTDRKPIDPP), and 228–274 (AMTT…DTRG). The segment covering 35 to 50 (PPQAETQMSAQASAQA) has biased composition (polar residues). One can recognise a Velvet domain in the interval 52–223 (GQEPEPDYKL…SDQGVRLRVR (172 aa)). 2 stretches are compositionally biased toward basic and acidic residues: residues 67–85 (PQRARVAQGKEKGTDRKPI) and 237–252 (QHAEVAKKHSEWDRKQ). A compositionally biased stretch (polar residues) spans 253–271 (TSAVSRHSSINENDSTPTD). A Nuclear localization signal motif is present at residues 364–371 (MSSHHGYT). 2 disordered regions span residues 378–455 (FAPH…QQTP) and 474–501 (PGQLVGTSAPSPHLGQGYRHGMINEPGA).

The protein belongs to the velvet family. VosA subfamily. Forms a heterodimeric complex with VELB; the formation of the VELB-VOSA complex is light-dependent.

The protein resides in the nucleus. Its function is as follows. Component of the VELB-VOSA heterodimeric complex that plays a dual role in activating genes associated with spore maturation and repressing certain development-associated genes. The complex binds DNA through the DNA-binding domain of VOSA that recognizes an 11-nucleotide consensus sequence 5'-CTGGCCGCGGC-3' consisting of two motifs in the promoters of key developmental regulatory genes. Appears dispensable for the development and pathogenicity. This Pyricularia oryzae (strain 70-15 / ATCC MYA-4617 / FGSC 8958) (Rice blast fungus) protein is Spore development regulator VOSA.